Reading from the N-terminus, the 297-residue chain is MKTSLRLEDGTKNSLQIPIDLIIEIFLRLSVNSIARCRCVSKQWASTLSRPYFTELFLTRSLARPKLLFAYRKGSDYLFLSSPQLQNPDDDHKKSSPVVVNYHMHHILTLGSGNMSWRTIQCCIPHRSFDGGICIDGLIYYYAGVNNNDIVIVCFDVRSEEFRFIIGALHHGSLINYNGKLSLYLPSTVYSRFNGVIRSIKLWVLEDAKRQEWSEHTYILPAMHDIMKTTDLRCVGMTQTKEFVFWSIKGMRFYVFYYNIERNTIKKVEMQGMEAFKESNVYTFLDHVEDVKLMQFF.

The 50-residue stretch at 11–60 (TKNSLQIPIDLIIEIFLRLSVNSIARCRCVSKQWASTLSRPYFTELFLTR) folds into the F-box domain.

In Arabidopsis thaliana (Mouse-ear cress), this protein is Putative F-box protein At2g19630.